The chain runs to 170 residues: Peptide deformylase 1 (170 aa).

The Fe cation site is built by C92 and H135. Residue E136 is part of the active site. Position 139 (H139) interacts with Fe cation.

It belongs to the polypeptide deformylase family. It depends on Fe(2+) as a cofactor.

It carries out the reaction N-terminal N-formyl-L-methionyl-[peptide] + H2O = N-terminal L-methionyl-[peptide] + formate. Its function is as follows. Removes the formyl group from the N-terminal Met of newly synthesized proteins. Requires at least a dipeptide for an efficient rate of reaction. N-terminal L-methionine is a prerequisite for activity but the enzyme has broad specificity at other positions. The polypeptide is Peptide deformylase 1 (Coxiella burnetii (strain RSA 493 / Nine Mile phase I)).